Consider the following 326-residue polypeptide: Serine protease 38 (326 aa).

Residues 1 to 32 (MAAPASVMGPLGPSALGLLLLLLVVAPPRVAA) form the signal peptide. The propeptide at 33–59 (LVHRQPENQGISLTGSVACGRPSMEGK) is activation peptide. A Peptidase S1 domain is found at 60–293 (ILGGVPAPER…FSKWICDNIE (234 aa)). Cys85 and Cys101 are oxidised to a cystine. The active-site Charge relay system is the His100. Asn125 is a glycosylation site (N-linked (GlcNAc...) asparagine). Asp150 serves as the catalytic Charge relay system. 3 disulfides stabilise this stretch: Cys183/Cys251, Cys214/Cys230, and Cys241/Cys269. Ser245 acts as the Charge relay system in catalysis.

It belongs to the peptidase S1 family.

The protein localises to the secreted. In Homo sapiens (Human), this protein is Serine protease 38 (PRSS38).